Here is a 386-residue protein sequence, read N- to C-terminus: Succinate--CoA ligase [ADP-forming] subunit beta (386 aa).

ATP is bound by residues K46, 53 to 55 (GRG), E99, A102, and E107. N199 and D213 together coordinate Mg(2+). Substrate-binding positions include N264 and 321–323 (GIV).

It belongs to the succinate/malate CoA ligase beta subunit family. Heterotetramer of two alpha and two beta subunits. Mg(2+) is required as a cofactor.

The catalysed reaction is succinate + ATP + CoA = succinyl-CoA + ADP + phosphate. The enzyme catalyses GTP + succinate + CoA = succinyl-CoA + GDP + phosphate. Its pathway is carbohydrate metabolism; tricarboxylic acid cycle; succinate from succinyl-CoA (ligase route): step 1/1. Succinyl-CoA synthetase functions in the citric acid cycle (TCA), coupling the hydrolysis of succinyl-CoA to the synthesis of either ATP or GTP and thus represents the only step of substrate-level phosphorylation in the TCA. The beta subunit provides nucleotide specificity of the enzyme and binds the substrate succinate, while the binding sites for coenzyme A and phosphate are found in the alpha subunit. The polypeptide is Succinate--CoA ligase [ADP-forming] subunit beta (Actinobacillus succinogenes (strain ATCC 55618 / DSM 22257 / CCUG 43843 / 130Z)).